We begin with the raw amino-acid sequence, 261 residues long: Undecaprenyl-diphosphatase (261 aa).

7 helical membrane-spanning segments follow: residues 38–58, 75–95, 106–126, 136–156, 181–201, 217–237, and 241–261; these read RSDF…TFVF, RDYV…GLAV, IQPI…AESV, VTWS…VFPG, FSFL…CFEL, VAFV…LGYI, and SFAP…TWLT.

The protein belongs to the UppP family.

The protein resides in the cell inner membrane. The catalysed reaction is di-trans,octa-cis-undecaprenyl diphosphate + H2O = di-trans,octa-cis-undecaprenyl phosphate + phosphate + H(+). Catalyzes the dephosphorylation of undecaprenyl diphosphate (UPP). Confers resistance to bacitracin. This is Undecaprenyl-diphosphatase from Xylella fastidiosa (strain 9a5c).